The chain runs to 446 residues: Packaging protein 1 (446 aa).

The disordered stretch occupies residues 1–72 (MEEKAGLRHL…SQVSKSKKQR (72 aa)). The span at 10-21 (LQNQQNEPSQDP) shows a compositional bias: polar residues. Residues 32–43 (HSDRNHLNKEAE) show a composition bias toward basic and acidic residues. 170 to 177 (GPTGCGKS) contacts ATP. The DNA-binding stretch occupies residues 439 to 446 (RYYHSKKK).

This sequence belongs to the adenoviridae packaging protein 1 family. Homodimer. Part of a genome packaging complex composed of packaging proteins 1, 2 and 3; this complex specifically binds to the packaging sequence on the left end of viral genomic DNA and performs packaging of the viral genome. Interacts with protein 33K.

It is found in the virion. It localises to the host nucleus. The protein resides in the host nucleoplasm. Its subcellular location is the host nucleolus. Its function is as follows. Component of the packaging machinery which encapsidates the viral DNA into preformed capsids and transcriptional activator of the viral major late promoter (MLP). Binds, along with packaging proteins 2 and 3, to the specific packaging sequence on the left end of viral genomic DNA and displays ATPase activity thereby providing the power stroke of the packaging machinery. The activity of packaging protein IVa2 is stimulated by protein 33K which acts as a terminase. May be the protein that pumps DNA into the capsid powered by ATP hydrolysis. Specifically binds to the 5'-CG-3' nucleotides of the repeats making up the packaging sequence. Component of the DEF-A and DEF-B transcription factors that bind downstream elements of the major late promoter (MLP), and stimulate transcription from the MLP after initiation of viral DNA replication. DEF-A is a heterodimer packaging proteins 1 and 2 and DEF-B is a homodimer of packaging protein 1. This chain is Packaging protein 1, found in Canine adenovirus serotype 1 (strain CLL) (CAdV-1).